The chain runs to 284 residues: MAQEKMELDLELPAGASPAEGGGPGGGGLRRSNSAPLIHGLSDSSPVFQAEAPSARRNSTTFPSRHGLLLPASPVRMHSSRLHQIKQEEGMDLINRETVHEREVQTAMQISHSWEESFSLSDNDVEKSASPKRIDFIPVSPAPSPTRGIGKQCFSPSLQSFVSSNGLPPSPIPSPTTRFTTRRSQSPINCIRPSVLGPLKRKCEMETDYQPKRFFQGITNMLSSDVAQLSDPGVCVSSDTLDGNSSSAGSSCNSPAKVSTTTDSPVSPAQAASPFIPVDELSSK.

The segment at 1–65 (MAQEKMELDL…RRNSTTFPSR (65 aa)) is disordered. Positions 20–29 (EGGGPGGGGL) are enriched in gly residues. Residue Ser32 is modified to Phosphoserine. Ser34 carries the post-translational modification Phosphoserine; by CHEK1. Phosphoserine occurs at positions 42, 45, 59, and 73. Lys86 participates in a covalent cross-link: Glycyl lysine isopeptide (Lys-Gly) (interchain with G-Cter in SUMO1). A phosphoserine mark is found at Ser140 and Ser144. A Phosphothreonine modification is found at Thr146. Positions 164-185 (SNGLPPSPIPSPTTRFTTRRSQ) are disordered. A compositionally biased stretch (low complexity) spans 175–185 (PTTRFTTRRSQ). Phosphoserine is present on residues Ser184 and Ser186. The interval 233–284 (GVCVSSDTLDGNSSSAGSSCNSPAKVSTTTDSPVSPAQAASPFIPVDELSSK) is disordered. Positions 243 to 254 (GNSSSAGSSCNS) are enriched in low complexity. The span at 256–267 (AKVSTTTDSPVS) shows a compositional bias: polar residues. A phosphoserine mark is found at Ser264, Ser267, and Ser273.

The protein belongs to the FAM122 family. In terms of assembly, interacts with PPP2CA and PPP2R1A. Interacts (via its N-terminus) with PPP2R2A; the interaction is direct and this interaction inhibits PP2A activity. The CHEK1-mediated Ser-34 phosphorylated form interacts with 14-3-3 proteins. CHEK1-mediated phosphorylation at Ser-34 negatively regulates its ability to inhibit serine/threonine-protein phosphatase 2A (PP2A) activity. Phosphorylation leads to its release from the PP2A complex and its sequestration by 14-3-3 proteins in the cytoplasm resulting in its inability to translocate to the nucleus, where it otherwise inhibits PP2A.

The protein localises to the nucleus. Its subcellular location is the cytoplasm. In terms of biological role, acts as an inhibitor of serine/threonine-protein phosphatase 2A (PP2A) activity. Inhibits PP2A activity by blocking the substrate binding site on PPP2R2A and the active site of PPP2CA. Potentiates ubiquitin-mediated proteasomal degradation of serine/threonine-protein phosphatase 2A catalytic subunit alpha (PPP2CA). Inhibits PP2A-mediated dephosphorylation of WEE1, promoting ubiquitin-mediated proteolysis of WEE1, thereby releasing G2/M checkpoint. This chain is P2R1A-PPP2R2A-interacting phosphatase regulator 1, found in Mus musculus (Mouse).